Here is a 126-residue protein sequence, read N- to C-terminus: Large ribosomal subunit protein eL14 (126 aa).

This sequence belongs to the eukaryotic ribosomal protein eL14 family.

In Tetrahymena thermophila (strain SB210), this protein is Large ribosomal subunit protein eL14 (RPL14).